We begin with the raw amino-acid sequence, 208 residues long: Protein-L-isoaspartate O-methyltransferase (208 aa).

The active site involves serine 59.

The protein belongs to the methyltransferase superfamily. L-isoaspartyl/D-aspartyl protein methyltransferase family.

It localises to the cytoplasm. The enzyme catalyses [protein]-L-isoaspartate + S-adenosyl-L-methionine = [protein]-L-isoaspartate alpha-methyl ester + S-adenosyl-L-homocysteine. In terms of biological role, catalyzes the methyl esterification of L-isoaspartyl residues in peptides and proteins that result from spontaneous decomposition of normal L-aspartyl and L-asparaginyl residues. It plays a role in the repair and/or degradation of damaged proteins. The polypeptide is Protein-L-isoaspartate O-methyltransferase (Vibrio atlanticus (strain LGP32) (Vibrio splendidus (strain Mel32))).